The chain runs to 181 residues: Acireductone dioxygenase (181 aa).

4 residues coordinate Fe(2+): H97, H99, E103, and H141. The Ni(2+) site is built by H97, H99, E103, and H141.

It belongs to the acireductone dioxygenase (ARD) family. As to quaternary structure, monomer. Requires Fe(2+) as cofactor. It depends on Ni(2+) as a cofactor.

It catalyses the reaction 1,2-dihydroxy-5-(methylsulfanyl)pent-1-en-3-one + O2 = 3-(methylsulfanyl)propanoate + CO + formate + 2 H(+). It carries out the reaction 1,2-dihydroxy-5-(methylsulfanyl)pent-1-en-3-one + O2 = 4-methylsulfanyl-2-oxobutanoate + formate + 2 H(+). It participates in amino-acid biosynthesis; L-methionine biosynthesis via salvage pathway; L-methionine from S-methyl-5-thio-alpha-D-ribose 1-phosphate: step 5/6. In terms of biological role, catalyzes 2 different reactions between oxygen and the acireductone 1,2-dihydroxy-3-keto-5-methylthiopentene (DHK-MTPene) depending upon the metal bound in the active site. Fe-containing acireductone dioxygenase (Fe-ARD) produces formate and 2-keto-4-methylthiobutyrate (KMTB), the alpha-ketoacid precursor of methionine in the methionine recycle pathway. Ni-containing acireductone dioxygenase (Ni-ARD) produces methylthiopropionate, carbon monoxide and formate, and does not lie on the methionine recycle pathway. The chain is Acireductone dioxygenase from Pseudomonas syringae pv. tomato (strain ATCC BAA-871 / DC3000).